Consider the following 175-residue polypeptide: NADH-ubiquinone oxidoreductase chain 6 (175 aa).

A run of 5 helical transmembrane segments spans residues methionine 1–serine 21, serine 25–leucine 45, phenylalanine 47–valine 67, alanine 88–leucine 108, and tyrosine 149–methionine 169.

It belongs to the complex I subunit 6 family. In terms of assembly, core subunit of respiratory chain NADH dehydrogenase (Complex I) which is composed of 45 different subunits.

The protein localises to the mitochondrion inner membrane. The catalysed reaction is a ubiquinone + NADH + 5 H(+)(in) = a ubiquinol + NAD(+) + 4 H(+)(out). Core subunit of the mitochondrial membrane respiratory chain NADH dehydrogenase (Complex I) which catalyzes electron transfer from NADH through the respiratory chain, using ubiquinone as an electron acceptor. Essential for the catalytic activity and assembly of complex I. The sequence is that of NADH-ubiquinone oxidoreductase chain 6 (MT-ND6) from Bos mutus grunniens (Wild yak).